Here is a 156-residue protein sequence, read N- to C-terminus: Small ribosomal subunit protein uS7 (156 aa).

It belongs to the universal ribosomal protein uS7 family. Part of the 30S ribosomal subunit. Contacts proteins S9 and S11.

Functionally, one of the primary rRNA binding proteins, it binds directly to 16S rRNA where it nucleates assembly of the head domain of the 30S subunit. Is located at the subunit interface close to the decoding center, probably blocks exit of the E-site tRNA. This is Small ribosomal subunit protein uS7 from Lawsonia intracellularis (strain PHE/MN1-00).